Reading from the N-terminus, the 79-residue chain is MIHPGHILFLLLLPVAAAQTTPGSCSGCGSLSLPLLAGLVAADAVASPLIVGAVFLCARPRRSPAQGDGKVYINMPGRG.

Positions 1 to 18 (MIHPGHILFLLLLPVAAA) are cleaved as a signal peptide. Residues 19 to 34 (QTTPGSCSGCGSLSLP) are Extracellular-facing. A helical transmembrane segment spans residues 35–55 (LLAGLVAADAVASPLIVGAVF). Residues 56–79 (LCARPRRSPAQGDGKVYINMPGRG) lie on the Cytoplasmic side of the membrane. Tyrosine 72 carries the phosphotyrosine modification. A GRB2 binding site region spans residues 72-74 (YIN). Residues 72–75 (YINM) form a PIK3R1 binding site region.

The protein belongs to the DAP10 family. Homodimer; Disulfide-linked. Heterohexamer composed of four subunits of HCST/DAP10 and two subunits of KLRK1. Interacts (via transmembrane domain) with KLRK1 (via transmembrane domain); the interaction is required for KLRK1 NK cell surface and induces NK cell-mediated cytotoxicity. Interacts with PIK3R1 and GRB2. Interacts with CLEC5A. Forms an CLEC5A/TYROBP/HCST trimolecular complex depending almost solely on TYROBP. Interacts with CD300H. In terms of processing, phosphorylated; PIK3R1 and GRB2 associate specifically with tyrosine-phosphorylated HCST. Post-translationally, O-glycosylated.

The protein localises to the membrane. Its function is as follows. Transmembrane adapter protein which associates with KLRK1 to form an activation receptor KLRK1-HCST in lymphoid and myeloid cells; this receptor plays a major role in triggering cytotoxicity against target cells expressing cell surface ligands such as MHC class I chain-related MICA and MICB, and UL16-binding proteins (ULBPs); these ligands are up-regulated by stress conditions and pathological state such as viral infection and tumor transformation. Functions as a docking site for PI3-kinase PIK3R1 and GRB2. Interaction of ULBPs with KLRK1-HCST triggers calcium mobilization and activation of the PIK3R1, MAP2K/ERK, and JAK2/STAT5 signaling pathways. Both PIK3R1 and GRB2 are required for full KLRK1-HCST-mediated activation and ultimate killing of target cells. In NK cells, KLRK1-HCST signaling directly induces cytotoxicity and enhances cytokine production initiated via DAP12/TYROBP-associated receptors. In T-cells, it provides primarily costimulation for TCR-induced signals. KLRK1-HCST receptor plays a role in immune surveillance against tumors and is required for cytolysis of tumors cells; indeed, melanoma cells that do not express KLRK1 ligands escape from immune surveillance mediated by NK cells. In Macaca mulatta (Rhesus macaque), this protein is Hematopoietic cell signal transducer (HCST).